The following is a 221-amino-acid chain: Probable lipoprotein CT_734 (221 aa).

The N-terminal stretch at M1–S24 is a signal peptide. C25 carries N-palmitoyl cysteine lipidation. C25 carries S-diacylglycerol cysteine lipidation.

Belongs to the chlamydial CPn_0875/CT_734/TC_0107 family.

The protein resides in the cell membrane. This chain is Probable lipoprotein CT_734, found in Chlamydia trachomatis serovar D (strain ATCC VR-885 / DSM 19411 / UW-3/Cx).